The following is a 261-amino-acid chain: Antiviral protein S (261 aa).

2 disulfide bridges follow: C34–C258 and C84–C105. Residue E175 is part of the active site.

This sequence belongs to the ribosome-inactivating protein family. Type 1 RIP subfamily.

The catalysed reaction is Endohydrolysis of the N-glycosidic bond at one specific adenosine on the 28S rRNA.. In terms of biological role, inhibits viral infection of plants, and protein synthesis in vitro. This Phytolacca americana (American pokeweed) protein is Antiviral protein S.